A 308-amino-acid chain; its full sequence is Ribosomal RNA small subunit methyltransferase H (308 aa).

S-adenosyl-L-methionine is bound by residues 36 to 38 (GGH), Asp55, Phe86, Asp103, and Gln110.

The protein belongs to the methyltransferase superfamily. RsmH family.

It is found in the cytoplasm. It carries out the reaction cytidine(1402) in 16S rRNA + S-adenosyl-L-methionine = N(4)-methylcytidine(1402) in 16S rRNA + S-adenosyl-L-homocysteine + H(+). Functionally, specifically methylates the N4 position of cytidine in position 1402 (C1402) of 16S rRNA. This Helicobacter pylori (strain P12) protein is Ribosomal RNA small subunit methyltransferase H.